The primary structure comprises 692 residues: MGKRVYDPIHDTFQLREDNSDETKADSPMQSVKSGSQEEASPSSIQSETETVTTKSIPVIHEIEIDDKNDDDSTQSEEENTNILLNFEPSTVPEATGASTATGPVTTNTVRRKPKESNASKYNRHLKKPDGEPFNRKDIQFSFMQELLMDKRQIFTNVLKPLYKNSIVPINIDGDKLSINVTDKEYDARTFVFNDKLTFAQLYVLTIATSIKCSKILRDKLLLDQQVAFSTCVLALLVNIGRLNTTINFYLEMTSQLRTFHSVPVLQLHANDPKLLQDTPRLKSILKNLPWGNEQLSLMETYKKVDQNDGEVDTVNKFNIINMLFSICDNSGLIDKRFLSKYVEVESKAQEQDMVDEQNEVKETEAENEKQESKAAYATTLFDILDYSKYEPKDRSNILIWLLYIHLETNLSQEEVEESVRFFNGLEDGAPAGKFILRCTERSYDTDPEDELEFGANQRIKRREFMSKMEEGRKRERTNVTEVKKPSIGGDKSEEDGEGEDDKSEETVEETRSLLTPTPILESSSPMTLNRKKVTPQLPKVTPAAPTETEEEITSAAIIDKNDLNLTPLKKYNSSATVNKVDKLISLDLNKHVSENGKTQEEFLADLKKSQVPNRLKRRDIGLIKIFNEFEDIPVASVLGIRGKKRKKFKDNLLGFETDFMKNLGASKKVLLNKIERAEIDDEEATAMFKLE.

Over residues 1 to 25 (MGKRVYDPIHDTFQLREDNSDETKA) the composition is skewed to basic and acidic residues. The interval 1-133 (MGKRVYDPIH…RHLKKPDGEP (133 aa)) is disordered. Residue Ser-27 is modified to Phosphoserine. Residues 28–56 (PMQSVKSGSQEEASPSSIQSETETVTTKS) show a composition bias toward polar residues. Acidic residues predominate over residues 64 to 80 (EIDDKNDDDSTQSEEEN). The span at 97–109 (GASTATGPVTTNT) shows a compositional bias: polar residues. A coiled-coil region spans residues 340–385 (SKYVEVESKAQEQDMVDEQNEVKETEAENEKQESKAAYATTLFDIL). The span at 465–485 (FMSKMEEGRKRERTNVTEVKK) shows a compositional bias: basic and acidic residues. The segment at 465 to 550 (FMSKMEEGRK…VTPAAPTETE (86 aa)) is disordered. A phosphoserine mark is found at Ser-487, Ser-493, and Ser-504. The span at 493–504 (SEEDGEGEDDKS) shows a compositional bias: acidic residues. Thr-507 bears the Phosphothreonine mark. The span at 513–528 (SLLTPTPILESSSPMT) shows a compositional bias: polar residues.

In terms of assembly, component of the chromatin-remodeling INO80 complex, at least composed of ARP4, ARP5, ARP8, RVB1, RVB2, TAF14, NHP10, IES1, IES3, IES4, IES6, ACT1, IES2, IES5 and INO80.

The protein localises to the nucleus. Its function is as follows. Probably involved in transcription regulation via its interaction with the INO80 complex, a chromatin-remodeling complex. The protein is Ino eighty subunit 1 (IES1) of Saccharomyces cerevisiae (strain ATCC 204508 / S288c) (Baker's yeast).